Consider the following 449-residue polypeptide: Adenylosuccinate synthetase (449 aa).

GTP contacts are provided by residues 12 to 18 and 40 to 42; these read GDEGKGK and GHT. The active-site Proton acceptor is aspartate 13. Mg(2+) contacts are provided by aspartate 13 and glycine 40. IMP is bound by residues 13 to 16, 38 to 41, threonine 128, arginine 142, glutamine 223, threonine 238, and arginine 302; these read DEGK and NAGH. The active-site Proton donor is the histidine 41. Residue 298 to 304 coordinates substrate; the sequence is TTTGRRR. GTP-binding positions include arginine 304, 330–332, and 412–414; these read KLD and SLG.

The protein belongs to the adenylosuccinate synthetase family. In terms of assembly, homodimer. It depends on Mg(2+) as a cofactor.

It localises to the cytoplasm. It carries out the reaction IMP + L-aspartate + GTP = N(6)-(1,2-dicarboxyethyl)-AMP + GDP + phosphate + 2 H(+). The protein operates within purine metabolism; AMP biosynthesis via de novo pathway; AMP from IMP: step 1/2. In terms of biological role, plays an important role in the de novo pathway of purine nucleotide biosynthesis. Catalyzes the first committed step in the biosynthesis of AMP from IMP. This chain is Adenylosuccinate synthetase, found in Gloeothece citriformis (strain PCC 7424) (Cyanothece sp. (strain PCC 7424)).